Consider the following 264-residue polypeptide: uncharacterized protein (264 aa).

A signal peptide spans 1-26 (MMKKLFHSTLIVLLFFSFFGVQPIHA).

This is an uncharacterized protein from Bacillus subtilis (strain 168).